The chain runs to 128 residues: Protein ripply2 (128 aa).

Residues Met1–Pro63 form a disordered region. Residues Gly9–Gly22 are compositionally biased toward low complexity. Residues Trp37–Trp40 carry the WRPW motif motif. The segment at His77–Tyr112 is ripply homology domain.

Belongs to the ripply family.

The protein localises to the nucleus. Its function is as follows. Plays a role in somitogenesis. Required for somite segregation and establishment of rostrocaudal polarity in somites. This is Protein ripply2 (RIPPLY2) from Homo sapiens (Human).